We begin with the raw amino-acid sequence, 321 residues long: Methionine import ATP-binding protein MetN (321 aa).

One can recognise an ABC transporter domain in the interval 2–241 (INAVDLHKVY…PGSLLARSLF (240 aa)). 38–45 (GPSGAGKS) serves as a coordination point for ATP.

It belongs to the ABC transporter superfamily. Methionine importer (TC 3.A.1.24) family. The complex is composed of two ATP-binding proteins (MetN), two transmembrane proteins (MetI) and a solute-binding protein (MetQ).

Its subcellular location is the cell membrane. The catalysed reaction is L-methionine(out) + ATP + H2O = L-methionine(in) + ADP + phosphate + H(+). It catalyses the reaction D-methionine(out) + ATP + H2O = D-methionine(in) + ADP + phosphate + H(+). In terms of biological role, part of the ABC transporter complex MetNIQ involved in methionine import. Responsible for energy coupling to the transport system. This chain is Methionine import ATP-binding protein MetN, found in Thermobifida fusca (strain YX).